A 187-amino-acid polypeptide reads, in one-letter code: UPF0215 protein PAE0952 (187 aa).

The protein belongs to the UPF0215 family.

The protein is UPF0215 protein PAE0952 of Pyrobaculum aerophilum (strain ATCC 51768 / DSM 7523 / JCM 9630 / CIP 104966 / NBRC 100827 / IM2).